Consider the following 178-residue polypeptide: Protein RICE FLOWERING LOCUS T 1 (178 aa).

This sequence belongs to the phosphatidylethanolamine-binding protein family. Interacts with FTIP1. In terms of tissue distribution, expressed in leaf vascular tissues. Specifically expressed in the phloem including companion cells.

The protein localises to the cytoplasm. Its subcellular location is the nucleus. It localises to the endoplasmic reticulum. Functionally, probable mobile flower-promoting signal (florigen) that moves from the leaf to the shoot apical meristem (SAM) and induces flowering. Promotes the transition from vegetative growth to flowering under long day (LD) conditions. Acts upstream of MADS14 and MADS15. May also participate in the promotion of flowering under short day (SD) conditions. In Oryza sativa subsp. japonica (Rice), this protein is Protein RICE FLOWERING LOCUS T 1.